A 191-amino-acid polypeptide reads, in one-letter code: dCTP deaminase (191 aa).

Residues 112–117 (KSTYAR), 136–138 (TLE), Q157, Y173, and Q183 each bind dCTP. The Proton donor/acceptor role is filled by E138.

Belongs to the dCTP deaminase family. Homotrimer.

The catalysed reaction is dCTP + H2O + H(+) = dUTP + NH4(+). It functions in the pathway pyrimidine metabolism; dUMP biosynthesis; dUMP from dCTP (dUTP route): step 1/2. Catalyzes the deamination of dCTP to dUTP. The polypeptide is dCTP deaminase (Xylella fastidiosa (strain M12)).